The sequence spans 185 residues: V-type ATP synthase subunit E (185 aa).

The protein belongs to the V-ATPase E subunit family.

Functionally, produces ATP from ADP in the presence of a proton gradient across the membrane. The polypeptide is V-type ATP synthase subunit E (Deinococcus radiodurans (strain ATCC 13939 / DSM 20539 / JCM 16871 / CCUG 27074 / LMG 4051 / NBRC 15346 / NCIMB 9279 / VKM B-1422 / R1)).